We begin with the raw amino-acid sequence, 529 residues long: DNA-binding protein (529 aa).

Over residues 1-17 (MASREEEQRETTPERGR) the composition is skewed to basic and acidic residues. Disordered regions lie at residues 1–107 (MASR…IVDS) and 125–166 (PVLI…AESE). Residues 129-139 (KHGKGGKRTVR) are compositionally biased toward basic residues. Residues 155-165 (EEEEEPSEAES) show a composition bias toward acidic residues. Tyrosine 195 carries the phosphotyrosine; by host modification. Residues cysteine 284 and histidine 286 each coordinate Zn(2+). The tract at residues 297–331 (IEMDVTSENGQRALKEQSSKAKIVKNRWGRNVVQI) is flexible loop. Residues cysteine 339, cysteine 355, cysteine 396, cysteine 398, cysteine 450, and cysteine 467 each contribute to the Zn(2+) site. Residues 513–529 (VSLPVAHSDARQNPFDF) form a C-terminal arm, DBP binding region.

It belongs to the adenoviridae E2A DNA-binding protein family. In terms of assembly, homomultimerizes on viral ssDNA bound to pTP. Forms a initiation complex with viral polymerase, pTP and hosts NFIA and POU2F1/OCT1. Interacts with host SRCAP.

It localises to the host nucleus. Functionally, plays a role in the elongation phase of viral strand displacement replication by unwinding the template in an ATP-independent fashion, employing its capacity to form multimers. Also enhances the rate of initiation. Released from template upon second strand synthesis. Assembles in complex with viral pTP, viral pol, host NFIA and host POU2F1/OCT1 on viral origin of replication. Covers the whole ssDNA genome during synthesis. The complementary strand synthesis induces its relese from DNA template. May inhibit cellular transcription mediated by the interaction between host SRCAP and CBP. This chain is DNA-binding protein, found in Human adenovirus C serotype 5 (HAdV-5).